Reading from the N-terminus, the 102-residue chain is Small ribosomal subunit protein uS10 (102 aa).

The protein belongs to the universal ribosomal protein uS10 family. In terms of assembly, part of the 30S ribosomal subunit.

Its function is as follows. Involved in the binding of tRNA to the ribosomes. The chain is Small ribosomal subunit protein uS10 from Planobispora rosea.